A 370-amino-acid chain; its full sequence is Protein SHI RELATED SEQUENCE 1 (370 aa).

The segment at 1-37 (MAGFFSLDGGGGGGGGGGNNQEDHRSNTNPPPPVSEA) is disordered. The segment covering 8–19 (DGGGGGGGGGGN) has biased composition (gly residues). Positions 144, 147, 155, 160, 164, and 171 each coordinate Zn(2+). A DNA-binding region (zn(2)-C6 fungal-type; degenerate) is located at residues 144 to 171 (CQDCGNQAKKDCSHMRCRTCCKSRGFEC). A Required for homo- and heterodimerization motif is present at residues 271–274 (IGGH).

Belongs to the SHI protein family. In terms of assembly, forms homodimers and heterodimers with LRP1. In terms of tissue distribution, expressed in flowers, seeds and seedlings.

It localises to the nucleus. In terms of biological role, transcription activator that binds DNA on 5'-ACTCTAC-3' and promotes auxin homeostasis-regulating gene expression (e.g. YUC genes), as well as genes affecting stamen development, cell expansion and timing of flowering. Synergistically with other SHI-related proteins, regulates gynoecium, stamen and leaf development in a dose-dependent manner, controlling apical-basal patterning. Promotes style and stigma formation, and influences vascular development during gynoecium development. May also have a role in the formation and/or maintenance of the shoot apical meristem (SAM). The sequence is that of Protein SHI RELATED SEQUENCE 1 (SRS1) from Arabidopsis thaliana (Mouse-ear cress).